Reading from the N-terminus, the 805-residue chain is Transforming acidic coiled-coil-containing protein 1 (805 aa).

At Ala2 the chain carries N-acetylalanine. Residue Ala2 is the site of N-myristoyl glycine attachment. The segment at 2–55 (AFSPWQILSPVQWAKWTWSAVRGGAAGEDEAGGPEGDPEEEDSQAETKSLSFSS) is interaction with LSM7 and SNRPG. Ser4, Ser10, and Ser44 each carry phosphoserine. The tract at residues 23 to 140 (RGGAAGEDEA…SVKNFREEPE (118 aa)) is disordered. Over residues 28–45 (GEDEAGGPEGDPEEEDSQ) the composition is skewed to acidic residues. 2 stretches are compositionally biased toward polar residues: residues 47 to 60 (ETKS…SEGN) and 111 to 128 (SKTC…QAID). Basic and acidic residues predominate over residues 130 to 140 (HSVKNFREEPE). A phosphoserine mark is found at Ser147 and Ser153. The tract at residues 152-259 (FSIETKDSTD…TNAAVEGTPL (108 aa)) is interaction with TDRD7. Residues 206 to 427 (EASAEADLKA…DPDNFDESMD (222 aa)) are interaction with YEATS4. SPAZ domains are found at residues 215 to 297 (AGNS…TPGT) and 359 to 507 (SKSA…TDEE). Residues 215–457 (AGNSCPELVP…VNEILESPKK (243 aa)) form a disordered region. The Bipartite nuclear localization signal 1 motif lies at 226 to 241 (RRSKLRKPKPVPLRKK). Positions 226 to 242 (RRSKLRKPKPVPLRKKA) are enriched in basic residues. Position 228 is a phosphoserine; by AURKC (Ser228). Ser248 and Ser276 each carry phosphoserine. Composition is skewed to polar residues over residues 296–305 (GTLSSDTNDS), 377–413 (LSQT…SSEG), and 431–447 (PTTT…TGNH). 2 positions are modified to phosphoserine: Ser381 and Ser406. The Bipartite nuclear localization signal 2 motif lies at 455–471 (PKKAKSRLITSGCKVKK). Position 483 is a phosphoserine (Ser483). Positions 493–526 (ISDISNRDGHATDEEKLASTSCGQKSAGAEVKGE) are disordered. Positions 497–509 (SNRDGHATDEEKL) are enriched in basic and acidic residues. At Tyr533 the chain carries Phosphotyrosine. At Ser591 the chain carries Phosphoserine. The stretch at 610–805 (IREEIITKEI…ELIAKLGKTD (196 aa)) forms a coiled coil. The segment at 701–805 (VLEGFKKNEE…ELIAKLGKTD (105 aa)) is interaction with CH-TOG.

This sequence belongs to the TACC family. As to quaternary structure, interacts with KIAA0097/CH-TOG and with the oncogenic transcription factor YEATS4. Interacts with AURKA, AURKB and AURKC. Interacts with LSM7, TDRD7 and SNRPG. Interacts with GCN5L2 and PCAF. Interacts with the thyroid hormone receptors THRB and THRA, predominantly with isoform alpha-2. The interaction with THRA isoform alpha-1 and THRB is decreased in the presence of thyroid hormone T3. Also interacts with other nuclear receptors, including ESR1, NR3C1, PPARG, RARA and RXRA, preferentially in the absence of their hormonal ligands. In terms of processing, isoform 1 is heavily phosphorylated; isoform 6 is not. As to expression, isoform 1, isoform 3 and isoform 5 are ubiquitous. Isoform 2 is strongly expressed in the brain, weakly detectable in lung and colon, and overexpressed in gastric cancer. Isoform 4 is not detected in normal tissues, but strong expression was found in gastric cancer tissues. Down-regulated in a subset of cases of breast cancer.

It is found in the cytoplasm. The protein resides in the nucleus. The protein localises to the cytoskeleton. Its subcellular location is the microtubule organizing center. It localises to the centrosome. It is found in the midbody. The protein resides in the membrane. Involved in transcription regulation induced by nuclear receptors, including in T3 thyroid hormone and all-trans retinoic acid pathways. Might promote the nuclear localization of the receptors. Likely involved in the processes that promote cell division prior to the formation of differentiated tissues. This is Transforming acidic coiled-coil-containing protein 1 (TACC1) from Homo sapiens (Human).